Reading from the N-terminus, the 231-residue chain is Protein N-terminal glutamine amidohydrolase (231 aa).

The disordered stretch occupies residues 1 to 21 (MADDRVAGGATPPPPPPPPPL). The span at 11–21 (TPPPPPPPPPL) shows a compositional bias: pro residues. Residues Cys-33, His-89, and Asp-108 contribute to the active site.

It belongs to the NTAQ1 family. In terms of assembly, monomer.

It carries out the reaction N-terminal L-glutaminyl-[protein] + H2O = N-terminal L-glutamyl-[protein] + NH4(+). Mediates the side-chain deamidation of N-terminal glutamine residues to glutamate, an important step in N-end rule pathway of protein degradation. Conversion of the resulting N-terminal glutamine to glutamate renders the protein susceptible to arginylation, polyubiquitination and degradation as specified by the N-end rule. Does not act on substrates with internal or C-terminal glutamine and does not act on non-glutamine residues in any position. This Oryza sativa subsp. indica (Rice) protein is Protein N-terminal glutamine amidohydrolase.